Consider the following 545-residue polypeptide: Luciferin 4-monooxygenase (545 aa).

The short motif at 543–545 (SKL) is the Microbody targeting signal element.

Belongs to the ATP-dependent AMP-binding enzyme family. Requires Mg(2+) as cofactor.

Its subcellular location is the peroxisome. It catalyses the reaction firefly D-luciferin + ATP + O2 = firefly oxyluciferin + hnu + AMP + CO2 + diphosphate. In terms of biological role, produces green light with a wavelength of 562 nm. In Photuris pensylvanica (Pennsylania firefly), this protein is Luciferin 4-monooxygenase.